The chain runs to 1912 residues: Methylcytosine dioxygenase TET2 (1912 aa).

Over residues 1–11 (MEQDRTTHAEG) the composition is skewed to basic and acidic residues. Positions 1-86 (MEQDRTTHAE…PHEDRGYSRC (86 aa)) are disordered. A phosphoserine mark is found at S15 and S23. Residues 53 to 74 (TKWQSSQSCYGISHMKGSQSSH) show a composition bias toward polar residues. S76 and S97 each carry phosphoserine. Disordered regions lie at residues 112-166 (LDQK…FPTR), 340-359 (DRNL…QKET), 367-388 (SSKF…QSLL), 429-470 (IDHQ…PEKS), 673-723 (PQTQ…DKQR), 832-862 (EQAQ…AEAA), 907-966 (QEQQ…NGQP), and 1009-1052 (ESEN…EGCN). 5 stretches are compositionally biased toward polar residues: residues 135-158 (SRQP…QESS), 340-353 (DRNL…SEQY), 367-387 (SSKF…SQSL), 434-447 (KTSS…SVHT), and 673-689 (PQTQ…SNFP). The segment covering 690 to 701 (QICQQQQQQQLQ) has biased composition (low complexity). 2 stretches are compositionally biased toward polar residues: residues 707–719 (QMPQ…QGSN) and 832–844 (EQAQ…SSLQ). A compositionally biased stretch (low complexity) spans 907–921 (QEQQQTQQSQPGHNQ). 2 stretches are compositionally biased toward polar residues: residues 944-966 (PQEN…NGQP) and 1036-1046 (SDTPGEQSQNG). S1036 carries the phosphoserine modification. Zn(2+)-binding residues include C1048, C1106, H1132, and C1134. 2-oxoglutarate is bound at residue R1174. Residues C1184, C1186, C1202, and C1211 each coordinate Zn(2+). Positions 1203–1216 (SWSMYYNGCKFARS) are interaction with DNA. Residue K1212 forms a Glycyl lysine isopeptide (Lys-Gly) (interchain with G-Cter in ubiquitin) linkage. C1271 contacts Zn(2+). C1287 contacts 2-oxoglutarate. Residue H1293 coordinates Zn(2+). Fe cation-binding residues include H1295 and D1297. Position 1300 (N1300) interacts with substrate. H1329 is a 2-oxoglutarate binding site. 2 disordered regions span residues 1379–1414 (KKKA…SSSH) and 1444–1514 (LQRH…HTSD). Residues 1387-1396 (AKTKKAARKR) are compositionally biased toward basic residues. A compositionally biased stretch (pro residues) spans 1456–1473 (QPQPPQPQPQTTPQPQPQ). The segment covering 1480–1512 (GNSQSVGSHCSGSTSVYTRQPTPHSPYPSSAHT) has biased composition (polar residues). H1795 lines the Fe cation pocket. Residue 1810-1812 (RIS) coordinates 2-oxoglutarate. A substrate-binding site is contributed by 1816 to 1818 (YRH). Zn(2+) is bound at residue H1826. A compositionally biased stretch (basic and acidic residues) spans 1842–1866 (EEECGKNGSDHVSQKNHGKQEKREP). Positions 1842-1871 (EEECGKNGSDHVSQKNHGKQEKREPTGPQE) are disordered.

Belongs to the TET family. In terms of assembly, interacts with HCFC1. Interacts with OGT. Interacts with PROSER1; this interaction mediates TET2 O-GlcNAcylation and stability by promoting the interaction between OGT and TET2. Directly interacts (via C-terminus) with the DCAF1 component of the CRL4(VprBP) E3 ubiquitin-protein ligase complex. Requires Fe(2+) as cofactor. Zn(2+) serves as cofactor. In terms of processing, may be glycosylated. It is unclear whether interaction with OGT leads to GlcNAcylation. According to a report, it is GlcNAcylated by OGT. In contrast, another group reports no GlcNAcylation by OGT in human ortholog. Monoubiquitinated at Lys-1212 by the DCX (DDB1-CUL4-X-box) E3 ubiquitin-protein ligase complex called CRL4(VprBP) or CUL4A-RBX1-DDB1-DCAF1/VPRBP complex; this modification promotes binding to DNA. Post-translationally, acetylated. Expressed in the brain, kidney, heart, lung, muscle and stomach. Expressed in germinal vesicle (GV) stage and MII-stage oocytes and in early embryos. Present in embryonic stem cells (ES cells).

It is found in the nucleus. It localises to the chromosome. It carries out the reaction a 5-methyl-2'-deoxycytidine in DNA + 2-oxoglutarate + O2 = a 5-hydroxymethyl-2'-deoxycytidine in DNA + succinate + CO2. The catalysed reaction is a 5-hydroxymethyl-2'-deoxycytidine in DNA + 2-oxoglutarate + O2 = a 5-formyl-2'-deoxycytidine in DNA + succinate + CO2 + H2O. The enzyme catalyses a 5-formyl-2'-deoxycytidine in DNA + 2-oxoglutarate + O2 = a 5-carboxyl-2'-deoxycytidine in DNA + succinate + CO2 + H(+). In terms of biological role, dioxygenase that catalyzes the conversion of the modified genomic base 5-methylcytosine (5mC) into 5-hydroxymethylcytosine (5hmC) and plays a key role in active DNA demethylation. Has a preference for 5-hydroxymethylcytosine in CpG motifs. Also mediates subsequent conversion of 5hmC into 5-formylcytosine (5fC), and conversion of 5fC to 5-carboxylcytosine (5caC). Conversion of 5mC into 5hmC, 5fC and 5caC probably constitutes the first step in cytosine demethylation. Methylation at the C5 position of cytosine bases is an epigenetic modification of the mammalian genome which plays an important role in transcriptional regulation. In addition to its role in DNA demethylation, also involved in the recruitment of the O-GlcNAc transferase OGT to CpG-rich transcription start sites of active genes, thereby promoting histone H2B GlcNAcylation by OGT. This chain is Methylcytosine dioxygenase TET2 (Tet2), found in Mus musculus (Mouse).